We begin with the raw amino-acid sequence, 371 residues long: Poly(rC)-binding protein 3 (371 aa).

3 consecutive KH domains span residues 45-95 (TLTI…TITG), 129-182 (PVTL…TISG), and 293-357 (ASTH…QYLI).

Widely expressed, with highest levels in testis and fat tissues and lowest in heart.

Its subcellular location is the cytoplasm. Single-stranded nucleic acid binding protein that binds preferentially to oligo dC. The protein is Poly(rC)-binding protein 3 (Pcbp3) of Mus musculus (Mouse).